Consider the following 132-residue polypeptide: Protein MrkF (132 aa).

It is found in the fimbrium. Its function is as follows. Appears to affect the stability of the intact fimbriae on the cell surface. The polypeptide is Protein MrkF (mrkF) (Klebsiella pneumoniae).